We begin with the raw amino-acid sequence, 263 residues long: MDIIQAKDIIIDFIGTKLEGTGIEGAVVGISGGIDSALVAYLSVEALGAENVLGIHMPEASTPKSEIEDASKVAEALGIDFKVINITNVLEVYRTAMPDIDGASAHVDGNLKARIRMSMLYYYANMFGRVVMGTGNKSEILLGYFTKYGDGGVDIEPIGDLYKTEVREMSKMLGVPESILEKAPSAGLWEGQTDEDDLGVTYETIDKVLQPILAGEGQERVHLKLGVPMEEISSILLRVRSNLHKRTTPQIAYLDDLRGDWLS.

29–36 (GISGGIDS) provides a ligand contact to ATP. Residue Asp-35 participates in Mg(2+) binding. Arg-114 contacts deamido-NAD(+). Thr-134 is a binding site for ATP. Glu-139 provides a ligand contact to Mg(2+). Positions 147 and 154 each coordinate deamido-NAD(+). ATP-binding residues include Lys-163 and Ser-185. Residue 244-245 (HK) participates in deamido-NAD(+) binding.

The protein belongs to the NAD synthetase family. Homodimer.

The enzyme catalyses deamido-NAD(+) + NH4(+) + ATP = AMP + diphosphate + NAD(+) + H(+). It functions in the pathway cofactor biosynthesis; NAD(+) biosynthesis; NAD(+) from deamido-NAD(+) (ammonia route): step 1/1. Its function is as follows. Catalyzes the ATP-dependent amidation of deamido-NAD to form NAD. Uses ammonia as a nitrogen source. In Methanococcoides burtonii (strain DSM 6242 / NBRC 107633 / OCM 468 / ACE-M), this protein is NH(3)-dependent NAD(+) synthetase.